The sequence spans 169 residues: MKEITVTEPAFVTHFSCSGSACSDHCCKGWKITLDKTTVKKYLASKDATIRTIAQDNIILLKKNNSHWGEIKLPSALGNCPYLDEDRLCRVQKTLGAKALSHTCSSFPRAHHTYKNEVRNSLSLACPEVTSRILNDPDAMALGEKKSFSRHSILRRYFQRSKSYSICFA.

Belongs to the FliB family.

Its function is as follows. Required for the secretion of flagellin and expression of motility. In Salmonella muenchen, this protein is Flagellar biosynthetic protein FliU (fliU).